We begin with the raw amino-acid sequence, 125 residues long: Probable 4-amino-4-deoxy-L-arabinose-phosphoundecaprenol flippase subunit ArnF (125 aa).

Over 1 to 2 (MG) the chain is Cytoplasmic. The helical transmembrane segment at 3–23 (VMWGLISVAIASLAQLSLGFA) threads the bilayer. Residues 24 to 33 (MMRLPSIAHP) are Periplasmic-facing. Residues 34–54 (LAFISGLGALNAATLALFAGL) traverse the membrane as a helical segment. The Cytoplasmic portion of the chain corresponds to 55–76 (AGYLVSVFCWHKTLHTLALSKA). A helical transmembrane segment spans residues 77–97 (YALLSLSYVLVWVASMLLPGL). The Periplasmic portion of the chain corresponds to 98 to 100 (QGA). The helical transmembrane segment at 101 to 121 (FSLKAMLGVLCIMAGVMLIFL) threads the bilayer. Residues 122–125 (PARS) are Cytoplasmic-facing.

Belongs to the ArnF family. As to quaternary structure, heterodimer of ArnE and ArnF.

The protein localises to the cell inner membrane. The protein operates within bacterial outer membrane biogenesis; lipopolysaccharide biosynthesis. In terms of biological role, translocates 4-amino-4-deoxy-L-arabinose-phosphoundecaprenol (alpha-L-Ara4N-phosphoundecaprenol) from the cytoplasmic to the periplasmic side of the inner membrane. The chain is Probable 4-amino-4-deoxy-L-arabinose-phosphoundecaprenol flippase subunit ArnF from Salmonella agona (strain SL483).